The primary structure comprises 403 residues: Phosphoglycerate kinase (403 aa).

Residues 24-26 (DLN), arginine 39, 62-65 (HLGR), arginine 121, and arginine 161 each bind substrate. ATP-binding positions include lysine 211, glycine 299, glutamate 330, and 359-362 (GGDS).

Belongs to the phosphoglycerate kinase family. As to quaternary structure, monomer.

The protein resides in the cytoplasm. It carries out the reaction (2R)-3-phosphoglycerate + ATP = (2R)-3-phospho-glyceroyl phosphate + ADP. The protein operates within carbohydrate degradation; glycolysis; pyruvate from D-glyceraldehyde 3-phosphate: step 2/5. In Corynebacterium jeikeium (strain K411), this protein is Phosphoglycerate kinase.